The sequence spans 453 residues: uncharacterized protein (453 aa).

Disordered regions lie at residues 140–161 (YGES…TRPQ) and 311–332 (TTTR…SASS).

This is an uncharacterized protein from Caenorhabditis elegans.